Here is a 655-residue protein sequence, read N- to C-terminus: A-type voltage-gated potassium channel KCND3 (655 aa).

Residues 1 to 182 are Cytoplasmic-facing; it reads MAAGVAAWLP…FENPHTSTLA (182 aa). The segment at 6–21 is interaction with KCNIP1 and KCNIP2; the sequence is AAWLPFARAAAIGWMP. Positions 70–78 are interaction with KCNIP1; sequence EKEFFFNED. Zn(2+) is bound by residues His104, Cys110, Cys131, and Cys132. Ser153 carries the post-translational modification Phosphoserine. The chain crosses the membrane as a helical span at residues 183-204; sequence LVFYYVTGFFIAVSVITNVVET. Over 205 to 223 the chain is Extracellular; sequence VPCGTVPGSKELPCGERYS. The helical transmembrane segment at 224–246 threads the bilayer; that stretch reads VAFFCLDTACVMIFTVEYLLRLF. The Cytoplasmic portion of the chain corresponds to 247 to 253; the sequence is AAPSRYR. The chain crosses the membrane as a helical span at residues 254-277; that stretch reads FIRSVMSIIDVVAIMPYYIGLVMT. Residues 278 to 283 are Extracellular-facing; that stretch reads NNEDVS. Residues 284-306 form a helical; Voltage-sensor membrane-spanning segment; the sequence is GAFVTLRVFRVFRIFKFSRHSQG. Over 307–318 the chain is Cytoplasmic; it reads LRILGYTLKSCA. A helical transmembrane segment spans residues 319 to 343; it reads SELGFLLFSLTMAIIIFATVMFYAE. Residues 344 to 352 are Extracellular-facing; that stretch reads KGSSASKFT. The segment at residues 353–366 is an intramembrane region (helical); it reads SIPASFWYTIVTMT. 4 residues coordinate K(+): Thr367, Leu368, Gly369, and Tyr370. The Selectivity filter signature appears at 367–372; it reads TLGYGD. The stretch at 367-374 is an intramembrane region; the sequence is TLGYGDMV. The chain crosses the membrane as a helical span at residues 378–400; sequence IAGKIFGSICSLSGVLVIALPVP. At 401–655 the chain is on the cytoplasmic side; it reads VIVSNFSRIY…ASNVVKVSVL (255 aa). The residue at position 459 (Thr459) is a Phosphothreonine. Positions 470–487 are interaction with KCNIP1 and KCNIP2; that stretch reads SLIESQHHHLLHCLEKTT. Positions 472–487 are mediates dendritic targeting; the sequence is IESQHHHLLHCLEKTT. Ser569 carries the post-translational modification Phosphoserine; by CaMK2D. At Ser585 the chain carries Phosphoserine. A disordered region spans residues 618–644; the sequence is PAPPALTPEGETRPPPASPGPNTNIPS.

The protein belongs to the potassium channel family. D (Shal) (TC 1.A.1.2) subfamily. Kv4.3/KCND3 sub-subfamily. Homotetramer. Heterotetramer with KCND2. Associates with the regulatory subunits KCNIP3 and KCNIP4. Interacts with KCNE1, KCNE2, SCN1B and KCNAB1 and DLG1. Component of heteromultimeric potassium channels. Identified in potassium channel complexes containing KCND1, KCND2, KCND3, KCNIP1, KCNIP2, KCNIP3, KCNIP4, DPP6 and DPP10. Interacts with KCNIP1; each KCNIP1 monomer interacts with two adjacent KCND3 subunits, through both the N-terminal inactivation ball of a KCND3 subunit and a C-terminal helix from the adjacent KCND3 subunit, clamping them together; this interaction stabilizes the tetrameric form and modulates the channel gating kinetics namely channel activation and inactivation kinetics and rate of recovery from inactivation. Interacts with DPP6; this interaction modulates the channel gating kinetics namely channel activation and inactivation kinetics and rate of recovery from inactivation. Interacts with KCNIP2; each KCNIP2 monomer interacts with two adjacent KCND3 subunits, through both the N-terminal inactivation ball of a KCND3 subunit and a C-terminal helix from the adjacent KCND3 subunit, clamping them together; this interaction modulates the channel gating kinetics. Regulated through phosphorylation at Ser-569 by CaMK2D. As to expression, detected in carotid body chemoreceptor cells and in frontal cortex.

It is found in the cell membrane. The protein resides in the sarcolemma. The protein localises to the cell projection. It localises to the dendrite. It carries out the reaction K(+)(in) = K(+)(out). Its function is as follows. Pore-forming (alpha) subunit of voltage-gated A-type potassium channels that mediates transmembrane potassium transport in excitable membranes, in brain and heart. In cardiomyocytes, may generate the transient outward potassium current I(To). In neurons, may conduct the transient subthreshold somatodendritic A-type potassium current (ISA). Kinetics properties are characterized by fast activation at subthreshold membrane potentials, rapid inactivation, and quick recovery from inactivation. Channel properties are modulated by interactions with regulatory subunits. Interaction with the regulatory subunits KCNIP1 or KCNIP2 modulates the channel gating kinetics namely channel activation and inactivation kinetics and rate of recovery from inactivation. Likewise, interaction with DPP6 modulates the channel gating kinetics namely channel activation and inactivation kinetics. In Oryctolagus cuniculus (Rabbit), this protein is A-type voltage-gated potassium channel KCND3.